The chain runs to 249 residues: Triosephosphate isomerase (249 aa).

Position 9 to 11 (9 to 11 (NWK)) interacts with substrate. The active-site Electrophile is the His94. The Proton acceptor role is filled by Glu166. Residues Gly172, Ser211, and 232–233 (GG) contribute to the substrate site.

The protein belongs to the triosephosphate isomerase family. As to quaternary structure, homodimer.

Its subcellular location is the cytoplasm. It carries out the reaction D-glyceraldehyde 3-phosphate = dihydroxyacetone phosphate. Its pathway is carbohydrate biosynthesis; gluconeogenesis. The protein operates within carbohydrate degradation; glycolysis; D-glyceraldehyde 3-phosphate from glycerone phosphate: step 1/1. Functionally, involved in the gluconeogenesis. Catalyzes stereospecifically the conversion of dihydroxyacetone phosphate (DHAP) to D-glyceraldehyde-3-phosphate (G3P). This Dechloromonas aromatica (strain RCB) protein is Triosephosphate isomerase.